The following is a 330-amino-acid chain: Putative zinc finger protein CONSTANS-LIKE 11 (330 aa).

Zn(2+) is bound by residues cysteine 5, cysteine 8, cysteine 28, and histidine 33. A B box-type 1; atypical zinc finger spans residues 5–47 (CDFCGTEKALIYCKSDSAKLCLNCDVNVHSANPLSQRHTRSLL). The segment at 48–88 (CEKCSLQPTAVHCMNENVSLCQGCQWTASNCTGLGHRLQSL) adopts a B box-type 2; degenerate zinc-finger fold. Residues 276–318 (RDEAKKRYKQKKSKRMFGKQIRYASRKARADTRKRVKGRFVKS) enclose the CCT domain.

Belongs to the CONSTANS family.

The protein resides in the nucleus. The polypeptide is Putative zinc finger protein CONSTANS-LIKE 11 (COL11) (Arabidopsis thaliana (Mouse-ear cress)).